The primary structure comprises 174 residues: Crossover junction endodeoxyribonuclease RuvC (174 aa).

Catalysis depends on residues Asp-8, Glu-68, and Asp-140. The Mg(2+) site is built by Asp-8, Glu-68, and Asp-140.

It belongs to the RuvC family. As to quaternary structure, homodimer which binds Holliday junction (HJ) DNA. The HJ becomes 2-fold symmetrical on binding to RuvC with unstacked arms; it has a different conformation from HJ DNA in complex with RuvA. In the full resolvosome a probable DNA-RuvA(4)-RuvB(12)-RuvC(2) complex forms which resolves the HJ. Mg(2+) is required as a cofactor.

It localises to the cytoplasm. It carries out the reaction Endonucleolytic cleavage at a junction such as a reciprocal single-stranded crossover between two homologous DNA duplexes (Holliday junction).. The RuvA-RuvB-RuvC complex processes Holliday junction (HJ) DNA during genetic recombination and DNA repair. Endonuclease that resolves HJ intermediates. Cleaves cruciform DNA by making single-stranded nicks across the HJ at symmetrical positions within the homologous arms, yielding a 5'-phosphate and a 3'-hydroxyl group; requires a central core of homology in the junction. The consensus cleavage sequence is 5'-(A/T)TT(C/G)-3'. Cleavage occurs on the 3'-side of the TT dinucleotide at the point of strand exchange. HJ branch migration catalyzed by RuvA-RuvB allows RuvC to scan DNA until it finds its consensus sequence, where it cleaves and resolves the cruciform DNA. The polypeptide is Crossover junction endodeoxyribonuclease RuvC (Legionella pneumophila (strain Lens)).